The primary structure comprises 272 residues: ATP synthase subunit a (272 aa).

A run of 6 helical transmembrane segments spans residues 42–62 (IDSLFFSVLLCLLFLVIAGFV), 108–128 (FVWIILMNSMDLIPIDLLPCI), 140–162 (ILPSADINITCAMALNIFALMIF), 177–197 (LIYHPFNYSLCIPINFLLEII), 219–239 (LIFILIAGFLPWWSQWMLSVP), and 241–261 (AIFHILIIILQAFIFMVLTII).

The protein belongs to the ATPase A chain family. F-type ATPases have 2 components, CF(1) - the catalytic core - and CF(0) - the membrane proton channel. CF(1) has five subunits: alpha(3), beta(3), gamma(1), delta(1), epsilon(1). CF(0) has three main subunits: a(1), b(2) and c(9-12). The alpha and beta chains form an alternating ring which encloses part of the gamma chain. CF(1) is attached to CF(0) by a central stalk formed by the gamma and epsilon chains, while a peripheral stalk is formed by the delta and b chains.

The protein localises to the cell inner membrane. In terms of biological role, key component of the proton channel; it plays a direct role in the translocation of protons across the membrane. This is ATP synthase subunit a from Blochmanniella floridana.